Here is a 548-residue protein sequence, read N- to C-terminus: Rhodopsin kinase GRK7 (548 aa).

Position 34 is a phosphoserine; by PKA (Ser34). An RGS domain is found at Phe54–Leu171. Residues Phe186–Phe449 enclose the Protein kinase domain. ATP-binding positions include Leu192 to Val200 and Lys215. Residue Asp311 is the Proton acceptor of the active site. Residues Gln450–Glu515 form the AGC-kinase C-terminal domain. A disordered region spans residues Glu523–Leu548. At Cys545 the chain carries Cysteine methyl ester. Cys545 carries the S-geranylgeranyl cysteine lipid modification. The propeptide at Leu546–Leu548 is removed in mature form.

It belongs to the protein kinase superfamily. AGC Ser/Thr protein kinase family. GPRK subfamily. As to quaternary structure, interacts (when prenylated) with PDE6D; this promotes release from membranes. In terms of processing, autophosphorylated. Phosphorylation at Ser-34 is regulated by light and activated by cAMP. In terms of tissue distribution, retina. Cones and rod.

It localises to the membrane. The catalysed reaction is L-threonyl-[rhodopsin] + ATP = O-phospho-L-threonyl-[rhodopsin] + ADP + H(+). It carries out the reaction L-seryl-[rhodopsin] + ATP = O-phospho-L-seryl-[rhodopsin] + ADP + H(+). Its activity is regulated as follows. Inhibited by phosphorylation of Ser-34. In terms of biological role, retina-specific kinase involved in the shutoff of the photoresponse and adaptation to changing light conditions via cone opsin phosphorylation, including rhodopsin (RHO). The chain is Rhodopsin kinase GRK7 (GRK7) from Ictidomys tridecemlineatus (Thirteen-lined ground squirrel).